The sequence spans 172 residues: MSYNCCSRNFSSCSHGGYLHYPGSSCGSSYPSNLVYSTDLCSPSTCQLGSSLYRGCQETCWRPNSCQTLCVESSPCHTSCYYPRTHMLCNSCLTMHVGSRGFGSNSCCSLSCGSRSCSSLGCGSNGFRYLNYRIHTSPSQSYRSRFCHPIYFPPRRWFHSSCYQPFCRSGFY.

5 tandem repeats follow at residues 46-55 (CQLGSSLYRG), 56-65 (CQETCWRPNS), 66-75 (CQTLCVESSP), 76-85 (CHTSCYYPRT), and 92-101 (CLTMHVGSRG). The interval 46–101 (CQLGSSLYRGCQETCWRPNSCQTLCVESSPCHTSCYYPRTHMLCNSCLTMHVGSRG) is 5 X 10 AA approximate repeats.

It belongs to the PMG family. Interacts with hair keratins.

Functionally, in the hair cortex, hair keratin intermediate filaments are embedded in an interfilamentous matrix, consisting of hair keratin-associated proteins (KRTAP), which are essential for the formation of a rigid and resistant hair shaft through their extensive disulfide bond cross-linking with abundant cysteine residues of hair keratins. The matrix proteins include the high-sulfur and high-glycine-tyrosine keratins. The chain is Keratin-associated protein 13-3 (KRTAP13-3) from Homo sapiens (Human).